Reading from the N-terminus, the 311-residue chain is Very-long-chain 3-oxoacyl-CoA reductase-B (311 aa).

Residues 8–28 (LFWVGAVTVLWLSVSSLWSLI) traverse the membrane as a helical segment. 48–77 (GKWAVVTGATDGIGKAYAEELARRGFAIVL) contacts NADP(+). Residues 125–145 (IGVLVNNVGVSYSYPEFFLNI) traverse the membrane as a helical segment. Residue Ser-187 participates in substrate binding. Residue Tyr-200 is the Proton acceptor of the active site. Residues 269-289 (GYLPHAIMGWVTASLLPAKLL) form a helical membrane-spanning segment.

Belongs to the short-chain dehydrogenases/reductases (SDR) family. 17-beta-HSD 3 subfamily.

The protein resides in the endoplasmic reticulum membrane. The catalysed reaction is a very-long-chain (3R)-3-hydroxyacyl-CoA + NADP(+) = a very-long-chain 3-oxoacyl-CoA + NADPH + H(+). The enzyme catalyses 17beta-estradiol + NAD(+) = estrone + NADH + H(+). It catalyses the reaction 17beta-estradiol + NADP(+) = estrone + NADPH + H(+). Its pathway is lipid metabolism; fatty acid biosynthesis. The protein operates within steroid biosynthesis; estrogen biosynthesis. Catalyzes the second of the four reactions of the long-chain fatty acids elongation cycle. This endoplasmic reticulum-bound enzymatic process, allows the addition of two carbons to the chain of long- and very long-chain fatty acids/VLCFAs per cycle. This enzyme has a 3-ketoacyl-CoA reductase activity, reducing 3-ketoacyl-CoA to 3-hydroxyacyl-CoA, within each cycle of fatty acid elongation. Thereby, it may participate in the production of VLCFAs of different chain lengths that are involved in multiple biological processes as precursors of membrane lipids and lipid mediators. May also catalyze the transformation of estrone (E1) into estradiol (E2) and play a role in estrogen formation. This chain is Very-long-chain 3-oxoacyl-CoA reductase-B (hsd17b12b), found in Danio rerio (Zebrafish).